The chain runs to 350 residues: tRNA uridine(34) hydroxylase (350 aa).

Positions 146–240 constitute a Rhodanese domain; the sequence is DDPDALFIDM…YARKAREQGL (95 aa). Cysteine 200 functions as the Cysteine persulfide intermediate in the catalytic mechanism.

Belongs to the TrhO family.

The enzyme catalyses uridine(34) in tRNA + AH2 + O2 = 5-hydroxyuridine(34) in tRNA + A + H2O. Catalyzes oxygen-dependent 5-hydroxyuridine (ho5U) modification at position 34 in tRNAs, the first step in 5-carboxymethoxyuridine (cmo5U) biosynthesis. May be part of an alternate pathway, which is able to bypass cmo5U biogenesis in a subset of tRNAs under aerobic conditions. The polypeptide is tRNA uridine(34) hydroxylase (Escherichia coli (strain K12)).